The primary structure comprises 239 residues: LexA repressor (239 aa).

Positions Phe-26–Thr-46 form a DNA-binding region, H-T-H motif. Catalysis depends on for autocatalytic cleavage activity residues Ser-160 and Lys-198.

The protein belongs to the peptidase S24 family. As to quaternary structure, homodimer.

It catalyses the reaction Hydrolysis of Ala-|-Gly bond in repressor LexA.. Functionally, represses a number of genes involved in the response to DNA damage (SOS response), including recA and lexA. In the presence of single-stranded DNA, RecA interacts with LexA causing an autocatalytic cleavage which disrupts the DNA-binding part of LexA, leading to derepression of the SOS regulon and eventually DNA repair. The polypeptide is LexA repressor (Methylobacterium sp. (strain 4-46)).